Consider the following 228-residue polypeptide: Cytidylate kinase (228 aa).

G17–T25 provides a ligand contact to ATP.

Belongs to the cytidylate kinase family. Type 1 subfamily.

It is found in the cytoplasm. The catalysed reaction is CMP + ATP = CDP + ADP. It catalyses the reaction dCMP + ATP = dCDP + ADP. This is Cytidylate kinase from Burkholderia thailandensis (strain ATCC 700388 / DSM 13276 / CCUG 48851 / CIP 106301 / E264).